A 775-amino-acid chain; its full sequence is Thiamine repressible genes regulatory protein thi1 (775 aa).

The zn(2)-C6 fungal-type DNA-binding region spans Cys39 to Cys65. Ser208 is modified (phosphoserine). Disordered regions lie at residues Leu676–Phe695 and Asn754–Gly775.

The protein resides in the nucleus. Transcription factor that activates the nmt1 promoter. Regulation of thiamine repressible genes. Positively regulates conjugation during meiosis. This Schizosaccharomyces pombe (strain 972 / ATCC 24843) (Fission yeast) protein is Thiamine repressible genes regulatory protein thi1 (thi1).